The primary structure comprises 674 residues: Probable copper-transporting P-type ATPase B (674 aa).

Residues 1-20 are disordered; the sequence is MNHSNHMHHDNHESHHHYSG. A run of 6 helical transmembrane segments spans residues 32-52, 57-77, 95-115, 127-147, 284-304, and 315-335; these read FFVSLIFAIPIILLSPMMGVN, FTFPGSEWVVLILSTILFFYG, GMMTLVALGISVAYIYSLYAF, TMDFFWELATLILIMLLGHWI, GYLFYFAVIVGVISFIVWMLI, and LVTVLVIACPHALGLAIPLVT. Residue Asp-367 is the 4-aspartylphosphate intermediate of the active site. Mg(2+) is bound by residues Asp-565 and Asp-569. 2 consecutive transmembrane segments (helical) span residues 623–645 and 649–671; these read LWWGAGYNIVAVPLAAGALAFIG and SPAVGAILMSLSTVIVAINAFTL.

This sequence belongs to the cation transport ATPase (P-type) (TC 3.A.3) family. Type IB subfamily.

Its subcellular location is the cell membrane. It carries out the reaction Cu(+)(in) + ATP + H2O = Cu(+)(out) + ADP + phosphate + H(+). Involved in copper transport. This chain is Probable copper-transporting P-type ATPase B (copB), found in Staphylococcus haemolyticus (strain JCSC1435).